A 223-amino-acid chain; its full sequence is MRLRAVLFDMDGTLLDTAPDFIAICQAMLAERGLPAVDDNLIRGVISGGARAMVATAFAMDPEADGFEALRLEFLERYQRDCAVHSKLFEGMAELLADIEKGNLLWGVVTNKPVRFAEPIMQQLGLAERSALLICPDHVKNSKPDPEPLILACKTLNLDPASVLFVGDDLRDIESGRDAGTRTAAVRYGYIHPEDNPNNWGADVVVDHPLELRKVIDSALCGC.

The active-site Nucleophile is the aspartate 9. 3 residues coordinate Mg(2+): aspartate 9, aspartate 11, and aspartate 168. Aspartate 11 (proton donor) is an active-site residue.

Belongs to the HAD-like hydrolase superfamily. CbbY/CbbZ/Gph/YieH family. Phosphatase MupP subfamily. Mg(2+) serves as cofactor.

The catalysed reaction is N-acetyl-D-muramate 6-phosphate + H2O = N-acetyl-D-muramate + phosphate. Its pathway is cell wall biogenesis; peptidoglycan recycling. Its function is as follows. Specifically catalyzes the dephosphorylation of N-acetylmuramate 6-phosphate (MurNAc-6P) to MurNac. Is involved in peptidoglycan recycling as part of a cell wall recycling pathway that bypasses de novo biosynthesis of the peptidoglycan precursor UDP-MurNAc. Plays a role in intrinsic resistance to fosfomycin, which targets the de novo synthesis of UDP-MurNAc. Shows a very low activity on GlcNAc-6P, and neither alpha-1-phosphorylated MurNAc, GlcNAc, or glucose nor glucosamine-6P or glucose-6P can be used as a substrate. The polypeptide is N-acetylmuramic acid 6-phosphate phosphatase (Pseudomonas putida (strain ATCC 47054 / DSM 6125 / CFBP 8728 / NCIMB 11950 / KT2440)).